The primary structure comprises 183 residues: ATP synthase subunit delta, chloroplastic (183 aa).

This sequence belongs to the ATPase delta chain family. As to quaternary structure, F-type ATPases have 2 components, F(1) - the catalytic core - and F(0) - the membrane proton channel. F(1) has five subunits: alpha(3), beta(3), gamma(1), delta(1), epsilon(1). CF(0) has four main subunits: a(1), b(1), b'(1) and c(10-14). The alpha and beta chains form an alternating ring which encloses part of the gamma chain. F(1) is attached to F(0) by a central stalk formed by the gamma and epsilon chains, while a peripheral stalk is formed by the delta, b and b' chains.

The protein localises to the plastid. Its subcellular location is the chloroplast thylakoid membrane. F(1)F(0) ATP synthase produces ATP from ADP in the presence of a proton or sodium gradient. F-type ATPases consist of two structural domains, F(1) containing the extramembraneous catalytic core and F(0) containing the membrane proton channel, linked together by a central stalk and a peripheral stalk. During catalysis, ATP synthesis in the catalytic domain of F(1) is coupled via a rotary mechanism of the central stalk subunits to proton translocation. Its function is as follows. This protein is part of the stalk that links CF(0) to CF(1). It either transmits conformational changes from CF(0) to CF(1) or is implicated in proton conduction. This chain is ATP synthase subunit delta, chloroplastic, found in Cyanidium caldarium (Red alga).